Consider the following 347-residue polypeptide: Leucine-rich repeat-containing protein 69 (347 aa).

8 LRR repeats span residues 38–60 (GLKT…CNLT), 61–82 (QLTT…MKYL), 84–105 (SLKN…ACDG), 108–129 (NLIL…VSRL), 131–153 (SLTY…CFLE), 154–175 (NLVE…IKFL), 177–199 (KLQK…CDLK), and 200–222 (KLRI…QDLK).

It belongs to the LRRC69 family.

In Homo sapiens (Human), this protein is Leucine-rich repeat-containing protein 69 (LRRC69).